Here is a 191-residue protein sequence, read N- to C-terminus: Peptidyl-tRNA hydrolase (191 aa).

Tyr17 contacts tRNA. His22 (proton acceptor) is an active-site residue. Residues Tyr68, Asn70, and Asn116 each coordinate tRNA.

The protein belongs to the PTH family. Monomer.

It is found in the cytoplasm. It catalyses the reaction an N-acyl-L-alpha-aminoacyl-tRNA + H2O = an N-acyl-L-amino acid + a tRNA + H(+). Hydrolyzes ribosome-free peptidyl-tRNAs (with 1 or more amino acids incorporated), which drop off the ribosome during protein synthesis, or as a result of ribosome stalling. Functionally, catalyzes the release of premature peptidyl moieties from peptidyl-tRNA molecules trapped in stalled 50S ribosomal subunits, and thus maintains levels of free tRNAs and 50S ribosomes. The sequence is that of Peptidyl-tRNA hydrolase from Mycobacterium tuberculosis (strain ATCC 25177 / H37Ra).